Here is a 359-residue protein sequence, read N- to C-terminus: TGACG-sequence-specific DNA-binding protein TGA-1A (359 aa).

Residues 44-54 (KRLDNETEDTS) are compositionally biased toward basic and acidic residues. The interval 44 to 72 (KRLDNETEDTSHGTVGTSNRYEPETSKPV) is disordered. Residues 72 to 135 (VEKVLRRLAQ…GGVDASQLSY (64 aa)) form the bZIP domain. Residues 73–125 (EKVLRRLAQNREAARKSRLRKKAYVQQLENSKLKLIQLEQELERARKQGMCVG) are a coiled coil. The basic motif stretch occupies residues 74 to 94 (KVLRRLAQNREAARKSRLRKK). The segment at 100-114 (LENSKLKLIQLEQEL) is leucine-zipper. A DOG1 domain is found at 143–354 (TAVFDMEYGH…RVLSSQWATR (212 aa)).

Belongs to the bZIP family. As to quaternary structure, binds DNA as a dimer.

It is found in the nucleus. Its function is as follows. Transcriptional activator that binds specifically to the DNA sequence 5'-TGACG-3'. Recognizes ocs elements like the as-1 motif of the cauliflower mosaic virus 35S promoter. Binding to the as-1-like cis elements mediate auxin- and salicylic acid-inducible transcription. Could also bind to the Hex-motif (5'-TGACGTGG-3') another cis-acting element found in plant histone promoters. The sequence is that of TGACG-sequence-specific DNA-binding protein TGA-1A (TGA1A) from Nicotiana tabacum (Common tobacco).